The chain runs to 146 residues: Snake venom vascular endothelial growth factor toxin (146 aa).

Positions 1-24 are cleaved as a signal peptide; that stretch reads MAVYLLAVAILFCIQGWPLGTVQG. A Pyrrolidone carboxylic acid modification is found at glutamine 25. 3 disulfide bridges follow: cysteine 38-cysteine 80, cysteine 69-cysteine 115, and cysteine 73-cysteine 117. The segment at 118–146 is disordered; the sequence is RPRSASGVNSRKHKRNPEEGEPRAKFPFV. Basic and acidic residues predominate over residues 133 to 146; that stretch reads NPEEGEPRAKFPFV.

This sequence belongs to the PDGF/VEGF growth factor family. Snake venom VEGF subfamily. Homodimer; disulfide-linked. Interacts with VEGF receptor-1 (FLT1) with a high affinity, whereas it binds to VEGF receptor-2 (KDR) with a low affinity. Does not bind VEGF receptor-3 (FLT4). Expressed by the venom gland.

The protein resides in the secreted. In terms of biological role, snake venom VEGFs that may contribute to venom dispersion and prey subjugation by inducing vascular permeability and hypotension. This protein induces an increase in capillary permeability after intradermal injection, as well as a drastic hypotensive effect after intravenous injection. The hypotension is mediated by nitric oxide (NO), which is produced by VEGF-activated endothelium NO synthase. Also induces angiogenesis in vitro. Like other crotalid VEGFs, this protein interacts with VEGF receptor-1 (FLT1) with a high affinity, whereas it binds to VEGF receptor-2 (KDR) with a low affinity. This is Snake venom vascular endothelial growth factor toxin from Bothrops jararaca (Jararaca).